We begin with the raw amino-acid sequence, 415 residues long: Coiled-coil domain-containing glutamate-rich protein 1 (415 aa).

Positions 1–11 (MTQTLDTKEDP) are enriched in basic and acidic residues. Disordered stretches follow at residues 1–20 (MTQT…GWAS), 29–64 (FGPR…QQYG), 133–162 (RPPG…SPPV), 202–241 (QEKL…GQED), and 255–372 (PSLV…PLEM). Composition is skewed to basic residues over residues 31–46 (PRRR…RPRY) and 135–156 (PGRK…RRSA). Coiled-coil stretches lie at residues 197-224 (EDMR…STAS) and 264-366 (DEEK…EEEN). The span at 211–220 (ALRAQQAQAA) shows a compositional bias: low complexity. Acidic residues predominate over residues 275-363 (VEEEEEGERE…EGLAEDEQTE (89 aa)).

It is found in the nucleus. Functionally, regulator of histone epigenetic modifications and chromatin compaction into the sperm head, required for histone-to-protamine (HTP) transition. HTP is a key event in which somatic histones are first replaced by testis-specific histone variants, then transition proteins (TNPs) are incorporated into the spermatid nucleus, and finally protamines (PRMs) replace the TNPs to promote chromatin condensation. The polypeptide is Coiled-coil domain-containing glutamate-rich protein 1 (CCER1) (Bos taurus (Bovine)).